The sequence spans 179 residues: SCAN domain-containing protein 1 (179 aa).

A disordered region spans residues 1–104 (MAATEPILAA…PGPAGSRLGP (104 aa)). The segment covering 52 to 80 (SPNAAVPEAIPTPRAAASAALELPLGPAP) has biased composition (low complexity). Residues 108–166 (RQRFRQFRYQDAAGPREAFRQLRELSRQWLRPDIRTKEQIVEMLVQEQLLAILPEAARA) form the SCAN box domain.

In terms of assembly, interacts with ZNF202.

Its subcellular location is the nucleus. In terms of biological role, may regulate transcriptional activity. The sequence is that of SCAN domain-containing protein 1 (SCAND1) from Homo sapiens (Human).